The chain runs to 616 residues: Chaperone protein HscA (616 aa).

Belongs to the heat shock protein 70 family.

Its function is as follows. Chaperone involved in the maturation of iron-sulfur cluster-containing proteins. Has a low intrinsic ATPase activity which is markedly stimulated by HscB. Involved in the maturation of IscU. In Escherichia coli O17:K52:H18 (strain UMN026 / ExPEC), this protein is Chaperone protein HscA.